A 409-amino-acid polypeptide reads, in one-letter code: Histidine--tRNA ligase (409 aa).

The protein belongs to the class-II aminoacyl-tRNA synthetase family.

The protein localises to the cytoplasm. It catalyses the reaction tRNA(His) + L-histidine + ATP = L-histidyl-tRNA(His) + AMP + diphosphate + H(+). The protein is Histidine--tRNA ligase (hisS) of Archaeoglobus fulgidus (strain ATCC 49558 / DSM 4304 / JCM 9628 / NBRC 100126 / VC-16).